We begin with the raw amino-acid sequence, 180 residues long: SPbeta prophage-derived uncharacterized protein YosC (180 aa).

This chain is SPbeta prophage-derived uncharacterized protein YosC (yosC), found in Bacillus subtilis (strain 168).